The chain runs to 161 residues: Large ribosomal subunit protein uL23m (161 aa).

The transit peptide at 1-34 (MSKIAGKRLVYFPNITFTLCRGLNLQPKFAVFRV) directs the protein to the mitochondrion.

This sequence belongs to the universal ribosomal protein uL23 family. In terms of assembly, component of the mitochondrial large ribosomal subunit (mt-LSU). Mature yeast 74S mitochondrial ribosomes consist of a small (37S) and a large (54S) subunit. The 37S small subunit contains a 15S ribosomal RNA (15S mt-rRNA) and at least 32 different proteins. The 54S large subunit contains a 21S rRNA (21S mt-rRNA) and at least 45 different proteins. uL23m forms the wall of the exit tunnel. Interacts with the C-terminus of OXA1.

The protein localises to the mitochondrion. Functionally, component of the mitochondrial ribosome (mitoribosome), a dedicated translation machinery responsible for the synthesis of mitochondrial genome-encoded proteins, including at least some of the essential transmembrane subunits of the mitochondrial respiratory chain. The mitoribosomes are attached to the mitochondrial inner membrane and translation products are cotranslationally integrated into the membrane. The sequence is that of Large ribosomal subunit protein uL23m (mrp20) from Schizosaccharomyces pombe (strain 972 / ATCC 24843) (Fission yeast).